The following is a 486-amino-acid chain: Bifunctional protein GlmU (486 aa).

A pyrophosphorylase region spans residues 1–236 (MTDQNLAIVV…SWLVDGINDR (236 aa)). UDP-N-acetyl-alpha-D-glucosamine-binding positions include 11–14 (LAAG), lysine 25, glutamine 78, and 83–84 (GT). Residue aspartate 109 coordinates Mg(2+). UDP-N-acetyl-alpha-D-glucosamine-binding residues include glycine 146, glutamate 161, asparagine 176, and asparagine 234. Mg(2+) is bound at residue asparagine 234. Residues 237 to 257 (AQLSEAAAKLNALTVRAWQLA) form a linker region. Residues 258 to 486 (GVTVQDPATT…ASNAAEESGE (229 aa)) form an N-acetyltransferase region. UDP-N-acetyl-alpha-D-glucosamine contacts are provided by arginine 339 and lysine 357. The active-site Proton acceptor is the histidine 369. 2 residues coordinate UDP-N-acetyl-alpha-D-glucosamine: tyrosine 372 and asparagine 383. Acetyl-CoA contacts are provided by residues alanine 386, 392–393 (NY), and alanine 429. Residues 459–486 (RRPGTDAARAAQRNGAAEASNAAEESGE) form a disordered region. The segment covering 465-486 (AARAAQRNGAAEASNAAEESGE) has biased composition (low complexity).

The protein in the N-terminal section; belongs to the N-acetylglucosamine-1-phosphate uridyltransferase family. In the C-terminal section; belongs to the transferase hexapeptide repeat family. As to quaternary structure, homotrimer. The cofactor is Mg(2+).

The protein resides in the cytoplasm. It carries out the reaction alpha-D-glucosamine 1-phosphate + acetyl-CoA = N-acetyl-alpha-D-glucosamine 1-phosphate + CoA + H(+). The catalysed reaction is N-acetyl-alpha-D-glucosamine 1-phosphate + UTP + H(+) = UDP-N-acetyl-alpha-D-glucosamine + diphosphate. It functions in the pathway nucleotide-sugar biosynthesis; UDP-N-acetyl-alpha-D-glucosamine biosynthesis; N-acetyl-alpha-D-glucosamine 1-phosphate from alpha-D-glucosamine 6-phosphate (route II): step 2/2. It participates in nucleotide-sugar biosynthesis; UDP-N-acetyl-alpha-D-glucosamine biosynthesis; UDP-N-acetyl-alpha-D-glucosamine from N-acetyl-alpha-D-glucosamine 1-phosphate: step 1/1. The protein operates within bacterial outer membrane biogenesis; LPS lipid A biosynthesis. Functionally, catalyzes the last two sequential reactions in the de novo biosynthetic pathway for UDP-N-acetylglucosamine (UDP-GlcNAc). The C-terminal domain catalyzes the transfer of acetyl group from acetyl coenzyme A to glucosamine-1-phosphate (GlcN-1-P) to produce N-acetylglucosamine-1-phosphate (GlcNAc-1-P), which is converted into UDP-GlcNAc by the transfer of uridine 5-monophosphate (from uridine 5-triphosphate), a reaction catalyzed by the N-terminal domain. This chain is Bifunctional protein GlmU, found in Leifsonia xyli subsp. xyli (strain CTCB07).